The primary structure comprises 316 residues: Porphobilinogen deaminase (316 aa).

Residue Cys245 is modified to S-(dipyrrolylmethanemethyl)cysteine.

The protein belongs to the HMBS family. Monomer. Requires dipyrromethane as cofactor.

It catalyses the reaction 4 porphobilinogen + H2O = hydroxymethylbilane + 4 NH4(+). It participates in porphyrin-containing compound metabolism; protoporphyrin-IX biosynthesis; coproporphyrinogen-III from 5-aminolevulinate: step 2/4. Its pathway is porphyrin-containing compound metabolism; chlorophyll biosynthesis. Functionally, tetrapolymerization of the monopyrrole PBG into the hydroxymethylbilane pre-uroporphyrinogen in several discrete steps. The chain is Porphobilinogen deaminase from Prochlorococcus marinus (strain AS9601).